Reading from the N-terminus, the 122-residue chain is UPF0102 protein TTE1452 (122 aa).

The protein belongs to the UPF0102 family.

In Caldanaerobacter subterraneus subsp. tengcongensis (strain DSM 15242 / JCM 11007 / NBRC 100824 / MB4) (Thermoanaerobacter tengcongensis), this protein is UPF0102 protein TTE1452.